The primary structure comprises 191 residues: Protein YceI (191 aa).

A signal peptide spans 1–22 (MKKSLLGLTFASLMFSAGSAVA).

This sequence belongs to the UPF0312 family. Type 1 subfamily.

Its subcellular location is the periplasm. The chain is Protein YceI from Shigella flexneri.